The sequence spans 287 residues: AA9 family lytic polysaccharide monooxygenase D (287 aa).

Residues 1-17 (MKLSLLAAAAIAPMVSA) form the signal peptide. Residue histidine 18 participates in Cu(2+) binding. Cysteine 67 and cysteine 189 are oxidised to a cystine. O2 is bound at residue histidine 176. Position 186 (tyrosine 186) interacts with Cu(2+). N-linked (GlcNAc...) asparagine glycans are attached at residues asparagine 220 and asparagine 250. Residues 239-287 (TGGSGSSTGSYNESNAEDSNEYPYQKESGTCQSNFYRREHARDFSHRRA) form a disordered region. The span at 274–287 (YRREHARDFSHRRA) shows a compositional bias: basic and acidic residues.

It belongs to the polysaccharide monooxygenase AA9 family. The cofactor is Cu(2+).

The protein resides in the secreted. The catalysed reaction is [(1-&gt;4)-beta-D-glucosyl]n+m + reduced acceptor + O2 = 4-dehydro-beta-D-glucosyl-[(1-&gt;4)-beta-D-glucosyl]n-1 + [(1-&gt;4)-beta-D-glucosyl]m + acceptor + H2O.. Lytic polysaccharide monooxygenase (LPMO) that depolymerizes crystalline and amorphous polysaccharides via the oxidation of scissile alpha- or beta-(1-4)-glycosidic bonds, yielding C1 oxidation products. Catalysis by LPMOs requires the reduction of the active-site copper from Cu(II) to Cu(I) by a reducing agent and H(2)O(2) or O(2) as a cosubstrate. Active on celluloseas as well as on the hemicellulose xyloglucan. Shows synergy with other hydrolases in degrading sorghum stover. This is AA9 family lytic polysaccharide monooxygenase D from Emericella nidulans (strain FGSC A4 / ATCC 38163 / CBS 112.46 / NRRL 194 / M139) (Aspergillus nidulans).